The sequence spans 433 residues: ATP-dependent protease ATPase subunit HslU (433 aa).

ATP-binding positions include Ile-18, 60–65 (GVGKTE), Asp-246, Glu-311, and Arg-383.

The protein belongs to the ClpX chaperone family. HslU subfamily. In terms of assembly, a double ring-shaped homohexamer of HslV is capped on each side by a ring-shaped HslU homohexamer. The assembly of the HslU/HslV complex is dependent on binding of ATP.

It is found in the cytoplasm. ATPase subunit of a proteasome-like degradation complex; this subunit has chaperone activity. The binding of ATP and its subsequent hydrolysis by HslU are essential for unfolding of protein substrates subsequently hydrolyzed by HslV. HslU recognizes the N-terminal part of its protein substrates and unfolds these before they are guided to HslV for hydrolysis. The sequence is that of ATP-dependent protease ATPase subunit HslU from Cereibacter sphaeroides (strain KD131 / KCTC 12085) (Rhodobacter sphaeroides).